Here is a 725-residue protein sequence, read N- to C-terminus: DNA replication licensing factor MCM7 (725 aa).

The MCM domain occupies 333–538 (IYNKLARSLA…METDLEMARH (206 aa)). 383–390 (GDPGVAKS) is a binding site for ATP. The Arginine finger motif lies at 515-518 (SRFD).

Belongs to the MCM family. In terms of assembly, component of the minichromosome maintenance (MCM) complex, a heterotetramer composed of MCM2, MCM3, MCM4, MCM5, MCM6 and MCM7.

The protein resides in the nucleus. The enzyme catalyses ATP + H2O = ADP + phosphate + H(+). Probable component of the MCM2-7 complex (MCM complex) that may function as a DNA helicase and which is essential to undergo a single round of replication initiation and elongation per cell cycle in eukaryotic cells. The protein is DNA replication licensing factor MCM7 (MCM7) of Oryza sativa subsp. indica (Rice).